We begin with the raw amino-acid sequence, 34 residues long: Photosystem II reaction center protein Psb30 (34 aa).

The chain crosses the membrane as a helical span at residues 6–26; it reads VIGQLLSATLIVLAGPAVIFV.

The protein belongs to the Psb30/Ycf12 family. As to quaternary structure, PSII is composed of 1 copy each of membrane proteins PsbA, PsbB, PsbC, PsbD, PsbE, PsbF, PsbH, PsbI, PsbJ, PsbK, PsbL, PsbM, PsbT, PsbX, PsbY, PsbZ, Psb30/Ycf12, peripheral proteins of the oxygen-evolving complex and a large number of cofactors. It forms dimeric complexes.

It is found in the plastid. It localises to the chloroplast thylakoid membrane. In terms of biological role, a core subunit of photosystem II (PSII), probably helps stabilize the reaction center. This chain is Photosystem II reaction center protein Psb30, found in Heterosigma akashiwo (strain NIES-293 / 8280G21-1).